Here is a 107-residue protein sequence, read N- to C-terminus: Nucleoid-associated protein RC1_2305 (107 aa).

This sequence belongs to the YbaB/EbfC family. As to quaternary structure, homodimer.

The protein localises to the cytoplasm. The protein resides in the nucleoid. Binds to DNA and alters its conformation. May be involved in regulation of gene expression, nucleoid organization and DNA protection. In Rhodospirillum centenum (strain ATCC 51521 / SW), this protein is Nucleoid-associated protein RC1_2305.